A 443-amino-acid polypeptide reads, in one-letter code: Ribosomal protein uS12 methylthiotransferase RimO (443 aa).

The MTTase N-terminal domain occupies 8–118 (PKVGFVSLGC…VVNAVHEVVP (111 aa)). 6 residues coordinate [4Fe-4S] cluster: C17, C53, C82, C151, C155, and C158. Residues 137–375 (LTPRHYAYLK…MAHQQAISAA (239 aa)) form the Radical SAM core domain. One can recognise a TRAM domain in the interval 378 to 443 (QLRIGKEIDV…DEYDMWAEPI (66 aa)).

The protein belongs to the methylthiotransferase family. RimO subfamily. It depends on [4Fe-4S] cluster as a cofactor.

The protein localises to the cytoplasm. It catalyses the reaction L-aspartate(89)-[ribosomal protein uS12]-hydrogen + (sulfur carrier)-SH + AH2 + 2 S-adenosyl-L-methionine = 3-methylsulfanyl-L-aspartate(89)-[ribosomal protein uS12]-hydrogen + (sulfur carrier)-H + 5'-deoxyadenosine + L-methionine + A + S-adenosyl-L-homocysteine + 2 H(+). Functionally, catalyzes the methylthiolation of an aspartic acid residue of ribosomal protein uS12. The sequence is that of Ribosomal protein uS12 methylthiotransferase RimO from Pseudomonas putida (strain ATCC 700007 / DSM 6899 / JCM 31910 / BCRC 17059 / LMG 24140 / F1).